Consider the following 849-residue polypeptide: Autoinducer 1 sensor kinase/phosphatase LuxN (849 aa).

7 helical membrane passes run 9–29 (IVYA…MWLF), 41–61 (VIFG…IAWI), 160–180 (SYFF…LVAM), 196–216 (IAGI…MTYF), 220–242 (FSLT…YALL), 251–275 (YIAY…AIFI), and 283–301 (WLIA…QLLY). In terms of domain architecture, Histidine kinase spans 468-683 (SIAHEMRNPL…EFHLYFPVVP (216 aa)). Phosphohistidine; by autocatalysis is present on His-471. The Response regulatory domain occupies 722-835 (TVLIVDDKEV…ALRHVLGNWL (114 aa)). Asp-771 carries the post-translational modification 4-aspartylphosphate.

It is found in the cell inner membrane. It carries out the reaction ATP + protein L-histidine = ADP + protein N-phospho-L-histidine.. With respect to regulation, the phosphatase activity is constitutive and the kinase activity is regulated by the presence or absence of AI-1. At low cell density the kinase activity overrides the phosphatase activity. Functionally, at low cell density, in the absence of AI-1 (autoinducer 1), LuxN has a kinase activity and autophosphorylates on His-471. The phosphoryl group is then transferred on Asp-771 of the response regulator domain. The phosphoryl group is transferred to LuxU, and ultimately to LuxO. At high cell density, in the presence of AI-1, the kinase activity is inactivated, and the response regulator domain has a phosphatase activity. LuxN phosphatase acts on itself. As LuxU could function to establish an equilibrium between the aspartyl-phosphate of LuxN and the aspartyl-phosphate of LuxO, LuxU transfers phosphate from LuxO to LuxN and finally phosphate is drained from the system. The sequence is that of Autoinducer 1 sensor kinase/phosphatase LuxN (luxN) from Vibrio campbellii (strain ATCC BAA-1116).